The following is a 183-amino-acid chain: Nucleoside triphosphate pyrophosphatase (183 aa).

The Proton acceptor role is filled by D71.

This sequence belongs to the Maf family. A divalent metal cation serves as cofactor.

The protein localises to the cytoplasm. It catalyses the reaction a ribonucleoside 5'-triphosphate + H2O = a ribonucleoside 5'-phosphate + diphosphate + H(+). It carries out the reaction a 2'-deoxyribonucleoside 5'-triphosphate + H2O = a 2'-deoxyribonucleoside 5'-phosphate + diphosphate + H(+). Nucleoside triphosphate pyrophosphatase. May have a dual role in cell division arrest and in preventing the incorporation of modified nucleotides into cellular nucleic acids. This Campylobacter jejuni subsp. jejuni serotype O:2 (strain ATCC 700819 / NCTC 11168) protein is Nucleoside triphosphate pyrophosphatase.